The chain runs to 297 residues: Putative heme-binding peroxidase (297 aa).

Catalysis depends on H74, which acts as the Proton acceptor. H198 provides a ligand contact to heme b. The active-site Tryptophan radical intermediate is W214.

This sequence belongs to the peroxidase family. Cytochrome c peroxidase subfamily. It depends on heme b as a cofactor.

Functionally, destroys radicals which are normally produced within the cells and which are toxic to biological systems. This Yarrowia lipolytica (strain CLIB 122 / E 150) (Yeast) protein is Putative heme-binding peroxidase.